The chain runs to 417 residues: Imidazolonepropionase (417 aa).

Fe(3+) is bound by residues H77 and H79. Zn(2+) is bound by residues H77 and H79. The 4-imidazolone-5-propanoate site is built by R86, Y149, and H182. Y149 contributes to the N-formimidoyl-L-glutamate binding site. Position 244 (H244) interacts with Fe(3+). H244 is a binding site for Zn(2+). E247 is a binding site for 4-imidazolone-5-propanoate. Position 323 (D323) interacts with Fe(3+). D323 contributes to the Zn(2+) binding site. N325 is a binding site for N-formimidoyl-L-glutamate.

This sequence belongs to the metallo-dependent hydrolases superfamily. HutI family. Requires Zn(2+) as cofactor. It depends on Fe(3+) as a cofactor.

It is found in the cytoplasm. It carries out the reaction 4-imidazolone-5-propanoate + H2O = N-formimidoyl-L-glutamate. It participates in amino-acid degradation; L-histidine degradation into L-glutamate; N-formimidoyl-L-glutamate from L-histidine: step 3/3. Catalyzes the hydrolytic cleavage of the carbon-nitrogen bond in imidazolone-5-propanoate to yield N-formimidoyl-L-glutamate. It is the third step in the universal histidine degradation pathway. The polypeptide is Imidazolonepropionase (Halobacterium salinarum (strain ATCC 29341 / DSM 671 / R1)).